We begin with the raw amino-acid sequence, 345 residues long: Phosphoribosylformylglycinamidine cyclo-ligase (345 aa).

The protein belongs to the AIR synthase family.

The protein resides in the cytoplasm. It catalyses the reaction 2-formamido-N(1)-(5-O-phospho-beta-D-ribosyl)acetamidine + ATP = 5-amino-1-(5-phospho-beta-D-ribosyl)imidazole + ADP + phosphate + H(+). It participates in purine metabolism; IMP biosynthesis via de novo pathway; 5-amino-1-(5-phospho-D-ribosyl)imidazole from N(2)-formyl-N(1)-(5-phospho-D-ribosyl)glycinamide: step 2/2. The protein is Phosphoribosylformylglycinamidine cyclo-ligase of Klebsiella pneumoniae (strain 342).